Consider the following 235-residue polypeptide: Sugar fermentation stimulation protein homolog (235 aa).

It belongs to the SfsA family.

This is Sugar fermentation stimulation protein homolog from Aliivibrio fischeri (strain ATCC 700601 / ES114) (Vibrio fischeri).